We begin with the raw amino-acid sequence, 137 residues long: Nucleoside diphosphate kinase (137 aa).

Residues lysine 9, phenylalanine 57, arginine 85, threonine 91, arginine 102, and asparagine 112 each contribute to the ATP site. Histidine 115 serves as the catalytic Pros-phosphohistidine intermediate.

The protein belongs to the NDK family. As to quaternary structure, homotetramer. It depends on Mg(2+) as a cofactor.

The protein resides in the cytoplasm. The enzyme catalyses a 2'-deoxyribonucleoside 5'-diphosphate + ATP = a 2'-deoxyribonucleoside 5'-triphosphate + ADP. It carries out the reaction a ribonucleoside 5'-diphosphate + ATP = a ribonucleoside 5'-triphosphate + ADP. Functionally, major role in the synthesis of nucleoside triphosphates other than ATP. The ATP gamma phosphate is transferred to the NDP beta phosphate via a ping-pong mechanism, using a phosphorylated active-site intermediate. The sequence is that of Nucleoside diphosphate kinase from Geotalea uraniireducens (strain Rf4) (Geobacter uraniireducens).